We begin with the raw amino-acid sequence, 1074 residues long: ADAMTS-like protein 4 (1074 aa).

The signal sequence occupies residues 1 to 24 (MENWTGRPWLYLLLLLSLPQLCLD). In terms of domain architecture, TSP type-1 1 spans 48-93 (GPWVQWASCSQPCGVGVQRRSRTCQLPTVQLHPSLPLPPRPPRHPE). The disordered stretch occupies residues 77–342 (QLHPSLPLPP…QHPGAWLPLL (266 aa)). A compositionally biased stretch (polar residues) spans 103–119 (RPQTSPETLPLYRTQSR). The segment covering 132–152 (LGREETQEIRAARRSRLRDPI) has biased composition (basic and acidic residues). Residues 206-226 (ANGSPQTELPPTELSVHTPSP) show a composition bias toward polar residues. A compositionally biased stretch (gly residues) spans 310–323 (GQQGQGPWGTGGTP). An N-linked (GlcNAc...) (complex) asparagine glycan is attached at N490. TSP type-1 domains are found at residues 723 to 782 (CPPY…QLRL), 783 to 842 (CGHW…GPCT), 845 to 909 (WFHS…GPCE), 910 to 969 (RTWR…QGQA), and 970 to 1026 (CQDR…QPCS). N-linked (GlcNAc...) asparagine glycosylation occurs at N773. The PLAC domain occupies 1029–1066 (PDDQCKDSSPHCPLVVQARLCVYPYYTATCCRSCAHVL).

In terms of assembly, interacts with CTSB. Interacts with FBN1. N-glycosylated. Can be O-fucosylated by POFUT2 on a serine or a threonine residue found within the consensus sequence C1-X(2)-(S/T)-C2-G of the TSP type-1 repeat domains where C1 and C2 are the first and second cysteine residue of the repeat, respectively. Fucosylated repeats can then be further glycosylated by the addition of a beta-1,3-glucose residue by the glucosyltransferase, B3GALTL. Fucosylation mediates the efficient secretion of ADAMTS family members. Can also be C-glycosylated with one or two mannose molecules on tryptophan residues within the consensus sequence W-X-X-W of the TPRs. N- and C-glycosylations can also facilitate secretion. As to expression, expressed in colon, heart, leukocyte, liver, lung, skeletal muscle, spleen, testis and placenta. Weaker expression in bone marrow, brain tissue, kidney and pancreas. Expression studies in fetal tissues reveal strong expression in heart, kidney, liver, lung and skeletal muscle, but weaker expression in fetal brain and skin.

Its subcellular location is the secreted. The protein resides in the extracellular space. It localises to the extracellular matrix. Functionally, positive regulation of apoptosis. May facilitate FBN1 microfibril biogenesis. The chain is ADAMTS-like protein 4 (ADAMTSL4) from Homo sapiens (Human).